A 71-amino-acid chain; its full sequence is Phosphatidylinositol N-acetylglucosaminyltransferase subunit Y (71 aa).

At 1 to 3 (MFL) the chain is on the cytoplasmic side. The helical transmembrane segment at 4 to 26 (SLPTLTVLIPLVSLAGLFYSASV) threads the bilayer. Residues 27-44 (EENFPQGCTSTASLCFYS) are Lumenal-facing. The helical transmembrane segment at 45 to 65 (LLLPITIPVYVFFHLWTWMGI) threads the bilayer. Residues 66–71 (KLFRHN) lie on the Cytoplasmic side of the membrane.

Component of the glycosylphosphatidylinositol-N-acetylglucosaminyltransferase (GPI-GnT) complex composed at least by PIGA, PIGC, PIGH, PIGP, PIGQ, PIGY and DPM2. Interacts directly with PIGA; this interaction regulates glycosylphosphatidylinositol-N-acetylglucosaminyltransferase activity. Does not interact with Ras proteins.

It localises to the endoplasmic reticulum membrane. It participates in glycolipid biosynthesis; glycosylphosphatidylinositol-anchor biosynthesis. Part of the glycosylphosphatidylinositol-N-acetylglucosaminyltransferase (GPI-GnT) complex that catalyzes the transfer of N-acetylglucosamine from UDP-N-acetylglucosamine to phosphatidylinositol and participates in the first step of GPI biosynthesis. May act by regulating the catalytic subunit PIGA. In Homo sapiens (Human), this protein is Phosphatidylinositol N-acetylglucosaminyltransferase subunit Y.